We begin with the raw amino-acid sequence, 181 residues long: Large ribosomal subunit protein eL18 (181 aa).

The protein belongs to the eukaryotic ribosomal protein eL18 family.

The protein localises to the cytoplasm. This is Large ribosomal subunit protein eL18 (rpl18) from Dictyostelium discoideum (Social amoeba).